We begin with the raw amino-acid sequence, 200 residues long: Ribonuclease HII (200 aa).

The RNase H type-2 domain occupies 9-198 (ALIAGVDEVG…VQRVLAQAKG (190 aa)). A divalent metal cation-binding residues include Asp-15, Glu-16, and Asp-107.

The protein belongs to the RNase HII family. Mn(2+) is required as a cofactor. It depends on Mg(2+) as a cofactor.

Its subcellular location is the cytoplasm. It catalyses the reaction Endonucleolytic cleavage to 5'-phosphomonoester.. Functionally, endonuclease that specifically degrades the RNA of RNA-DNA hybrids. The chain is Ribonuclease HII from Pseudoalteromonas translucida (strain TAC 125).